The following is a 193-amino-acid chain: Acyl carrier protein phosphodiesterase (193 aa).

This sequence belongs to the AcpH family.

It carries out the reaction holo-[ACP] + H2O = apo-[ACP] + (R)-4'-phosphopantetheine + H(+). Converts holo-ACP to apo-ACP by hydrolytic cleavage of the phosphopantetheine prosthetic group from ACP. This Serratia proteamaculans (strain 568) protein is Acyl carrier protein phosphodiesterase.